Consider the following 979-residue polypeptide: Glutamate receptor ionotropic, kainate 5 (979 aa).

Positions 1 to 14 (MPAELLLLLIVAFA) are cleaved as a signal peptide. The Extracellular portion of the chain corresponds to 15–544 (NPSCQVLSSL…YFSFLDPFSP (530 aa)). 3 disulfides stabilise this stretch: Cys36–Cys292, Cys83–Cys334, and Cys165–Cys170. Residues Asn219, Asn271, Asn285, Asn322, Asn372, Asn394, Asn400, Asn407, Asn414, and Asn478 are each glycosylated (N-linked (GlcNAc...) asparagine). Residues 545–565 (AVWLFMLLAYLAVSCVLFLAA) traverse the membrane as a helical segment. Residues 566–622 (RLSPYEWYNPHPCLRARPHILENQYTLGNSLWFPVGGFMQQGSEIMPRALSTRCVSG) are Cytoplasmic-facing. Residues 623-643 (VWWAFTLIIISSYTANLAAFL) traverse the membrane as a helical segment. Over 644-803 (TVQRMEVPVE…HRAKGLGMEN (160 aa)) the chain is Extracellular. Asn735 carries an N-linked (GlcNAc...) asparagine glycan. Residues 804-824 (IGGIFVVLICGLIIAVFVAVM) form a helical membrane-spanning segment. Topologically, residues 825 to 979 (EFIWSTRRSA…TGPRELTEHE (155 aa)) are cytoplasmic. Positions 856 to 867 (RKTSRSRRRRRP) are enriched in basic residues. Disordered stretches follow at residues 856–875 (RKTS…RALL), 890–925 (LYSA…APTP), and 942–979 (RASG…TEHE). Gly residues predominate over residues 894-903 (GAGGDAGAHG). The span at 912-923 (PGPPGGPRPQAP) shows a compositional bias: pro residues.

This sequence belongs to the glutamate-gated ion channel (TC 1.A.10.1) family. GRIK5 subfamily. As to quaternary structure, homotetramer. Heterotetramer with GRIK2. Can form functional heteromeric receptors with GRIK1, GRIK2 and GRIK3. Forms a heteromeric complex with GRIK2. As to expression, expressed in the hippocampal mossy fiber synapses (at protein level).

The protein resides in the cell membrane. Its subcellular location is the postsynaptic cell membrane. It is found in the presynaptic cell membrane. Functionally, ionotropic glutamate receptor that functions as a cation-permeable ligand-gated ion channel, gated by L-glutamate and the glutamatergic agonist kainic acid. Cannot form functional channels on its own and produces channel activity only in heteromeric assembly with GRIK2 subunit. Can form functional heteromeric receptors with GRIK1 and GRIK3. The protein is Glutamate receptor ionotropic, kainate 5 (Grik5) of Mus musculus (Mouse).